Reading from the N-terminus, the 453-residue chain is D-aminoacyl-tRNA deacylase (453 aa).

Residues 428–453 (VRADVALHERPRERVRRPSDDEGKGN) are disordered.

It belongs to the DtdA deacylase family. As to quaternary structure, monomer. Requires Zn(2+) as cofactor.

The catalysed reaction is a D-aminoacyl-tRNA + H2O = a tRNA + a D-alpha-amino acid + H(+). It carries out the reaction glycyl-tRNA(Ala) + H2O = tRNA(Ala) + glycine + H(+). Its function is as follows. D-aminoacyl-tRNA deacylase with broad substrate specificity. By recycling D-aminoacyl-tRNA to D-amino acids and free tRNA molecules, this enzyme counteracts the toxicity associated with the formation of D-aminoacyl-tRNA entities in vivo. The protein is D-aminoacyl-tRNA deacylase of Halobacterium salinarum (strain ATCC 29341 / DSM 671 / R1).